Consider the following 1789-residue polypeptide: Protein sprint (1789 aa).

Disordered regions lie at residues Thr53–Pro120, Thr140–Asn190, Pro218–Gly237, Gln261–Leu317, Leu329–Asp378, and Arg401–Leu460. Residues Ser82 to Asn114 are compositionally biased toward low complexity. A compositionally biased stretch (polar residues) spans Thr140–Gln149. The segment covering Pro176 to Ala185 has biased composition (acidic residues). Residues Arg223–Cys233 are compositionally biased toward polar residues. Residues Asn295–Leu317 show a composition bias toward low complexity. The span at Gln337–Asn361 shows a compositional bias: polar residues. Low complexity predominate over residues Gln409 to Ser418. Positions Thr428 to Glu445 are enriched in acidic residues. In terms of domain architecture, SH2 spans Trp473–Arg566. Disordered stretches follow at residues Phe632–Gln689, Thr744–Gly787, Gly852–Ser918, Asp969–Leu1006, Ala1040–Pro1067, Arg1094–Pro1123, and Pro1138–Arg1160. A compositionally biased stretch (pro residues) spans Lys639–Pro649. The segment covering Thr671–Ser686 has biased composition (low complexity). Over residues Thr857 to Ser868 the composition is skewed to polar residues. Positions Ala903 to Asp914 are enriched in basic and acidic residues. Residues Thr974 to Ser984 show a composition bias toward low complexity. Composition is skewed to polar residues over residues Thr994–Leu1006 and Thr1048–Gly1065. Low complexity predominate over residues Ser1143 to Gln1154. Positions Arg1531–Glu1673 constitute a VPS9 domain. Positions Cys1689–Ala1777 constitute a Ras-associating domain.

Belongs to the RIN (Ras interaction/interference) family. In terms of tissue distribution, in late cellular blastoderm embryos, it is expressed in the posterior end. Then, as development proceeds, it is expressed in the developing midgut, amnioserosa and in a specific subset of CNS neurons. Isoform 1 is expressed earlier in developing midgut and amnioserosa, but is not expressed in the CNS.

Potential Ras effector protein. May function as a guanine nucleotide exchange (GEF), by exchanging bound GDP for free GTP. This is Protein sprint (spri) from Drosophila melanogaster (Fruit fly).